We begin with the raw amino-acid sequence, 112 residues long: Nitrogen regulatory protein P-II (112 aa).

Tyrosine 51 carries the O-UMP-tyrosine modification.

Belongs to the P(II) protein family. Homotrimer.

Its function is as follows. In nitrogen-limiting conditions, when the ratio of Gln to 2-ketoglutarate decreases, P-II is uridylylated to P-II-UMP. P-II-UMP allows the deadenylation of glutamine synthetase (GS), thus activating the enzyme. Conversely, in nitrogen excess P-II is deuridylated and promotes the adenylation of GS. P-II indirectly controls the transcription of the GS gene (glnA). P-II prevents NR-II-catalyzed conversion of NR-I to NR-I-phosphate, the transcriptional activator of glnA. When P-II is uridylylated to P-II-UMP, these events are reversed. The sequence is that of Nitrogen regulatory protein P-II (glnB) from Bradyrhizobium diazoefficiens (strain JCM 10833 / BCRC 13528 / IAM 13628 / NBRC 14792 / USDA 110).